A 334-amino-acid polypeptide reads, in one-letter code: Ribonucleoside-diphosphate reductase small chain (334 aa).

Fe cation is bound by residues aspartate 77, glutamate 108, and histidine 111. The active site involves tyrosine 115. Residues glutamate 171, glutamate 205, and histidine 208 each coordinate Fe cation.

The protein belongs to the ribonucleoside diphosphate reductase small chain family. In terms of assembly, heterotetramer composed of a homodimer of the large subunit (R1) and a homodimer of the small subunit (R2). Larger multisubunit protein complex are also active, composed of (R1)n(R2)n. The cofactor is Fe cation.

The catalysed reaction is a 2'-deoxyribonucleoside 5'-diphosphate + [thioredoxin]-disulfide + H2O = a ribonucleoside 5'-diphosphate + [thioredoxin]-dithiol. In terms of biological role, ribonucleoside-diphosphate reductase holoenzyme provides the precursors necessary for viral DNA synthesis. Allows virus growth in non-dividing cells. Catalyzes the biosynthesis of deoxyribonucleotides from the corresponding ribonucleotides. In Ornithodoros (relapsing fever ticks), this protein is Ribonucleoside-diphosphate reductase small chain.